The sequence spans 356 residues: Protein RecA (356 aa).

Gly-68–Thr-75 lines the ATP pocket.

The protein belongs to the RecA family.

It is found in the cytoplasm. Can catalyze the hydrolysis of ATP in the presence of single-stranded DNA, the ATP-dependent uptake of single-stranded DNA by duplex DNA, and the ATP-dependent hybridization of homologous single-stranded DNAs. It interacts with LexA causing its activation and leading to its autocatalytic cleavage. This chain is Protein RecA, found in Clostridium botulinum (strain Alaska E43 / Type E3).